The primary structure comprises 59 residues: SPbeta prophage-derived uncharacterized protein YosB (59 aa).

The chain is SPbeta prophage-derived uncharacterized protein YosB (yosB) from Bacillus subtilis (strain 168).